The following is a 266-amino-acid chain: Secreted RxLR effector protein 128 (266 aa).

Positions 1–18 (MRGAFYTAIALLIGRSQT) are cleaved as a signal peptide. The RxLR-dEER motif lies at 48–63 (RYLRDGLAHSATNEER).

It belongs to the RxLR effector family.

The protein localises to the secreted. It localises to the host nucleus. Secreted effector that dos not suppress the host cell death induced by cell death-inducing proteins. The protein is Secreted RxLR effector protein 128 of Plasmopara viticola (Downy mildew of grapevine).